A 241-amino-acid chain; its full sequence is Phosphoribosyl isomerase A (241 aa).

Asp11 serves as the catalytic Proton acceptor. Catalysis depends on Asp130, which acts as the Proton donor.

The protein belongs to the HisA/HisF family.

Its subcellular location is the cytoplasm. It carries out the reaction 1-(5-phospho-beta-D-ribosyl)-5-[(5-phospho-beta-D-ribosylamino)methylideneamino]imidazole-4-carboxamide = 5-[(5-phospho-1-deoxy-D-ribulos-1-ylimino)methylamino]-1-(5-phospho-beta-D-ribosyl)imidazole-4-carboxamide. The enzyme catalyses N-(5-phospho-beta-D-ribosyl)anthranilate = 1-(2-carboxyphenylamino)-1-deoxy-D-ribulose 5-phosphate. It participates in amino-acid biosynthesis; L-histidine biosynthesis; L-histidine from 5-phospho-alpha-D-ribose 1-diphosphate: step 4/9. It functions in the pathway amino-acid biosynthesis; L-tryptophan biosynthesis; L-tryptophan from chorismate: step 3/5. Its function is as follows. Involved in both the histidine and tryptophan biosynthetic pathways. This chain is Phosphoribosyl isomerase A, found in Streptomyces griseus subsp. griseus (strain JCM 4626 / CBS 651.72 / NBRC 13350 / KCC S-0626 / ISP 5235).